The sequence spans 157 residues: Protein Smg (157 aa).

Belongs to the Smg family.

The sequence is that of Protein Smg from Sodalis glossinidius (strain morsitans).